Here is a 458-residue protein sequence, read N- to C-terminus: UDP-N-acetylmuramoylalanine--D-glutamate ligase (458 aa).

124–130 contacts ATP; that stretch reads GSDGKTT.

This sequence belongs to the MurCDEF family.

The protein resides in the cytoplasm. It catalyses the reaction UDP-N-acetyl-alpha-D-muramoyl-L-alanine + D-glutamate + ATP = UDP-N-acetyl-alpha-D-muramoyl-L-alanyl-D-glutamate + ADP + phosphate + H(+). The protein operates within cell wall biogenesis; peptidoglycan biosynthesis. Cell wall formation. Catalyzes the addition of glutamate to the nucleotide precursor UDP-N-acetylmuramoyl-L-alanine (UMA). The polypeptide is UDP-N-acetylmuramoylalanine--D-glutamate ligase (Clostridium tetani (strain Massachusetts / E88)).